The sequence spans 603 residues: uncharacterized protein (603 aa).

The 93-residue stretch at Met1–Ala93 folds into the PE domain.

The protein belongs to the mycobacterial PE family. PGRS subfamily.

This is an uncharacterized protein from Mycobacterium tuberculosis (strain ATCC 25618 / H37Rv).